The chain runs to 102 residues: Large ribosomal subunit protein bL21 (102 aa).

It belongs to the bacterial ribosomal protein bL21 family. As to quaternary structure, part of the 50S ribosomal subunit. Contacts protein L20.

In terms of biological role, this protein binds to 23S rRNA in the presence of protein L20. This chain is Large ribosomal subunit protein bL21, found in Marinomonas sp. (strain MWYL1).